Consider the following 98-residue polypeptide: Putative septation protein SpoVG (98 aa).

This sequence belongs to the SpoVG family.

In terms of biological role, could be involved in septation. The polypeptide is Putative septation protein SpoVG (Alkaliphilus metalliredigens (strain QYMF)).